A 714-amino-acid polypeptide reads, in one-letter code: Mitochondrial division protein 1 (714 aa).

Positions 240 to 298 form a coiled coil; sequence LNIQKNSTLSEIRDIEVEVENLRQKKEKLLGKIANIEQNQLLLEDNLKQIDDRLDFLEE. Residues 323 to 354 are disordered; sequence LKNDAIRNEGVTTESISSEASNLPPRRRQQLR. Polar residues predominate over residues 332–343; the sequence is GVTTESISSEAS. Phosphoserine is present on serine 376. 7 WD repeats span residues 396 to 436, 439 to 478, 500 to 539, 561 to 603, 604 to 642, 644 to 681, and 685 to 714; these read THDD…KIGE, GHLA…QLYQ, AHTD…QTID, TQRN…RTLK, GHTD…NKFH, YSAP…SWSC, and GNET…IWAV.

Belongs to the WD repeat MDV1/CAF4 family. In terms of assembly, interacts with CAF4, DNM1 and FIS1, components of the mitochondrial fission machinery. Interacts via its N-terminal, coiled-coil extension (NTE) with FIS1, and via its WD repeats with DNM1.

Its subcellular location is the mitochondrion outer membrane. Its function is as follows. Involved in mitochondrial fission. Has a partially redundant function to CAF4 in acting as an adapter protein, binding to FIS1 on the mitochondrial outer membrane and recruiting the dynamin-like GTPase DNM1 to form mitochondrial fission complexes. Formation of these complexes is required to promote constriction and fission of the mitochondrial compartment at a late step in mitochondrial division. This is Mitochondrial division protein 1 (MDV1) from Saccharomyces cerevisiae (strain YJM789) (Baker's yeast).